Here is a 356-residue protein sequence, read N- to C-terminus: UDP-N-acetylglucosamine--N-acetylmuramyl-(pentapeptide) pyrophosphoryl-undecaprenol N-acetylglucosamine transferase (356 aa).

Residues 15–17, Asn127, Arg163, Ser191, Ile244, 263–268, and Gln288 each bind UDP-N-acetyl-alpha-D-glucosamine; these read TGG and ALTVSE.

The protein belongs to the glycosyltransferase 28 family. MurG subfamily.

Its subcellular location is the cell inner membrane. It catalyses the reaction di-trans,octa-cis-undecaprenyl diphospho-N-acetyl-alpha-D-muramoyl-L-alanyl-D-glutamyl-meso-2,6-diaminopimeloyl-D-alanyl-D-alanine + UDP-N-acetyl-alpha-D-glucosamine = di-trans,octa-cis-undecaprenyl diphospho-[N-acetyl-alpha-D-glucosaminyl-(1-&gt;4)]-N-acetyl-alpha-D-muramoyl-L-alanyl-D-glutamyl-meso-2,6-diaminopimeloyl-D-alanyl-D-alanine + UDP + H(+). Its pathway is cell wall biogenesis; peptidoglycan biosynthesis. Cell wall formation. Catalyzes the transfer of a GlcNAc subunit on undecaprenyl-pyrophosphoryl-MurNAc-pentapeptide (lipid intermediate I) to form undecaprenyl-pyrophosphoryl-MurNAc-(pentapeptide)GlcNAc (lipid intermediate II). This Yersinia pseudotuberculosis serotype O:1b (strain IP 31758) protein is UDP-N-acetylglucosamine--N-acetylmuramyl-(pentapeptide) pyrophosphoryl-undecaprenol N-acetylglucosamine transferase.